The sequence spans 457 residues: Acetylcholine receptor subunit alpha-1-B (457 aa).

An N-terminal signal peptide occupies residues 1-20; sequence MDYTASCLIFLFIAAGTVFG. Residues 21 to 230 lie on the Extracellular side of the membrane; sequence TDHETRLIGD…ITYHFVLQRL (210 aa). Disulfide bonds link C148-C162 and C212-C213. N161 is a glycosylation site (N-linked (GlcNAc...) asparagine). Transmembrane regions (helical) follow at residues 231 to 255, 263 to 281, and 297 to 316; these read PLYF…VFYL, MTLS…LVIV, and YMLF…VIVI. At 317–428 the chain is on the cytoplasmic side; sequence NTHHRSPSTH…WKFVAMVLDH (112 aa). A helical transmembrane segment spans residues 429-447; that stretch reads ILLAVFMTVCVIGTLAVFA.

Belongs to the ligand-gated ion channel (TC 1.A.9) family. Acetylcholine receptor (TC 1.A.9.1) subfamily. Alpha-1/CHRNA1 sub-subfamily. One of the alpha chains that assemble within the acetylcholine receptor, a pentamer of two alpha chains, a beta, a delta, and a gamma or epsilon chains.

It localises to the postsynaptic cell membrane. It is found in the cell membrane. The catalysed reaction is K(+)(in) = K(+)(out). The enzyme catalyses Na(+)(in) = Na(+)(out). Functionally, upon acetylcholine binding, the AChR responds by an extensive change in conformation that affects all subunits and leads to opening of an ion-conducting channel across the plasma membrane. The sequence is that of Acetylcholine receptor subunit alpha-1-B (chrna1-b) from Xenopus laevis (African clawed frog).